Here is a 299-residue protein sequence, read N- to C-terminus: Virginiamycin B lyase (299 aa).

Position 229 (His-229) interacts with substrate. Position 269 (Glu-269) interacts with Mg(2+). The active-site Proton acceptor is the His-271. Glu-286 contributes to the Mg(2+) binding site.

It belongs to the Vgb family. Monomer. It depends on Mg(2+) as a cofactor.

Its function is as follows. Inactivates the type B streptogramin antibiotics by linearizing the lactone ring at the ester linkage, generating a free phenylglycine carboxylate and converting the threonyl moiety into 2-amino-butenoic acid. The sequence is that of Virginiamycin B lyase from Bordetella bronchiseptica (strain ATCC BAA-588 / NCTC 13252 / RB50) (Alcaligenes bronchisepticus).